The chain runs to 295 residues: MSSKCESVKPQLVNEVLGYWDLLKPKIMYLVVLTGITGMIIAPGNIHPFIGIISTLCIALGSGAAGAINMWYDSDIDALMQRTKNRPIPSGKIARSTAIELGLVLSVISVTVMMIAVNYLSGILLAISIGFYSLVYTMYLKRRTPQNIVIGGIAGALPPIIGWTSVTNAISIESLILFLIIFVWTPPHFWALSLLNYQEYEKAKVPMLPVTHGIFTTKIYILVYSIILFIITLLPGIFLKDCLLYETCAIPLGMTFVFHAFKVFVSINHYKYKAMFTYSIAYLFILFICIIISSF.

The next 9 helical transmembrane spans lie at 27–47 (IMYL…GNIH), 48–68 (PFIG…AGAI), 93–115 (IARS…VMMI), 119–136 (YLSG…SLVY), 147–167 (NIVI…TSVT), 175–195 (LILF…LSLL), 219–239 (IYIL…GIFL), 247–267 (TCAI…FVSI), and 275–295 (MFTY…ISSF).

It belongs to the UbiA prenyltransferase family. Protoheme IX farnesyltransferase subfamily.

Its subcellular location is the cell inner membrane. It catalyses the reaction heme b + (2E,6E)-farnesyl diphosphate + H2O = Fe(II)-heme o + diphosphate. It participates in porphyrin-containing compound metabolism; heme O biosynthesis; heme O from protoheme: step 1/1. Its function is as follows. Converts heme B (protoheme IX) to heme O by substitution of the vinyl group on carbon 2 of heme B porphyrin ring with a hydroxyethyl farnesyl side group. This chain is Protoheme IX farnesyltransferase, found in Ehrlichia chaffeensis (strain ATCC CRL-10679 / Arkansas).